Reading from the N-terminus, the 318-residue chain is Mitochondrial coenzyme A transporter SLC25A42 (318 aa).

Solcar repeat units lie at residues 31–117 (RQVL…YKRI), 129–214 (LPPW…LKSL), and 224–312 (PYPF…MQIL). 6 helical membrane-spanning segments follow: residues 33–53 (VLSS…AVAP), 89–109 (LWRG…IQFS), 135–155 (LFAG…LDLV), 186–206 (LYHG…LSFF), 230–250 (MIFG…LDVV), and 293–313 (VKGP…QILL).

This sequence belongs to the mitochondrial carrier (TC 2.A.29) family.

Its subcellular location is the mitochondrion inner membrane. The catalysed reaction is ADP(out) + CoA(in) = ADP(in) + CoA(out). The enzyme catalyses 3'-dephospho-CoA(in) + ADP(out) = 3'-dephospho-CoA(out) + ADP(in). It catalyses the reaction adenosine 3',5'-bisphosphate(in) + ADP(out) = adenosine 3',5'-bisphosphate(out) + ADP(in). It carries out the reaction AMP(in) + ADP(out) = AMP(out) + ADP(in). The catalysed reaction is dADP(in) + ADP(out) = dADP(out) + ADP(in). The enzyme catalyses ADP(in) + ATP(out) = ADP(out) + ATP(in). Functionally, mitochondrial carrier mediating the transport of coenzyme A (CoA) in mitochondria in exchange for intramitochondrial (deoxy)adenine nucleotides and adenosine 3',5'-diphosphate. The sequence is that of Mitochondrial coenzyme A transporter SLC25A42 (SLC25A42) from Homo sapiens (Human).